A 261-amino-acid polypeptide reads, in one-letter code: Eukaryotic translation initiation factor 3 subunit J-A (261 aa).

The segment covering 1-11 has biased composition (low complexity); sequence MAAAAAAAAAA. Residues 1–113 are disordered; that stretch reads MAAAAAAAAA…EPEESKVLTP (113 aa). The sufficient for interaction with EIF3B stretch occupies residues 4-72; that stretch reads AAAAAAAAGD…KEEAEVKPEV (69 aa). Residues Ser14, Ser16, and Ser23 each carry the phosphoserine modification. The span at 43–64 shows a compositional bias: acidic residues; the sequence is EGEDEDEDVKDNWDDDDDENKE. Residues 65–109 are compositionally biased toward basic and acidic residues; that stretch reads EAEVKPEVKISEKKKIAEKIKEKERQQKKRQEEIKKRLEEPEESK. Positions 73 to 138 form a coiled coil; that stretch reads KISEKKKIAE…ESDLELAKET (66 aa). A Glycyl lysine isopeptide (Lys-Gly) (interchain with G-Cter in SUMO2) cross-link involves residue Lys109. Thr112 is modified (phosphothreonine). A Phosphoserine modification is found at Ser130. A promotes stable association with the 40S ribosome region spans residues 246–261; it reads YGGYEGGYVQDYEDFM. Position 257 is a phosphotyrosine (Tyr257).

The protein belongs to the eIF-3 subunit J family. In terms of assembly, component of the eukaryotic translation initiation factor 3 (eIF-3) complex, which is composed of 13 subunits: EIF3A, EIF3B, EIF3C, EIF3D, EIF3E, EIF3F, EIF3G, EIF3H, EIF3I, EIF3J, EIF3K, EIF3L and EIF3M. The eIF-3 complex appears to include 3 stable modules: module A is composed of EIF3A, EIF3B, EIF3G and EIF3I; module B is composed of EIF3F, EIF3H, and EIF3M; and module C is composed of EIF3C, EIF3D, EIF3E, EIF3K and EIF3L. EIF3C of module C binds EIF3B of module A and EIF3H of module B, thereby linking the three modules. EIF3J is a labile subunit that binds to the eIF-3 complex via EIF3B. The eIF-3 complex interacts with RPS6KB1 under conditions of nutrient depletion. Mitogenic stimulation leads to binding and activation of a complex composed of MTOR and RPTOR, leading to phosphorylation and release of RPS6KB1 and binding of EIF4B to eIF-3. Post-translationally, phosphorylated. Phosphorylation is enhanced upon serum stimulation.

It is found in the cytoplasm. In terms of biological role, component of the eukaryotic translation initiation factor 3 (eIF-3) complex, which is required for several steps in the initiation of protein synthesis. The eIF-3 complex associates with the 40S ribosome and facilitates the recruitment of eIF-1, eIF-1A, eIF-2:GTP:methionyl-tRNAi and eIF-5 to form the 43S pre-initiation complex (43S PIC). The eIF-3 complex stimulates mRNA recruitment to the 43S PIC and scanning of the mRNA for AUG recognition. The eIF-3 complex is also required for disassembly and recycling of post-termination ribosomal complexes and subsequently prevents premature joining of the 40S and 60S ribosomal subunits prior to initiation. The eIF-3 complex specifically targets and initiates translation of a subset of mRNAs involved in cell proliferation, including cell cycling, differentiation and apoptosis, and uses different modes of RNA stem-loop binding to exert either translational activation or repression. This subunit binds directly within the mRNA entry channel of the 40S ribosome to the aminoacyl (A) site. It may regulate the interaction between the 43S PIC and mRNA. This is Eukaryotic translation initiation factor 3 subunit J-A (Eif3j1) from Mus musculus (Mouse).